The chain runs to 264 residues: Thymidylate synthase (264 aa).

Arg-21 contributes to the dUMP binding site. His-51 contacts (6R)-5,10-methylene-5,6,7,8-tetrahydrofolate. DUMP is bound at residue 126–127; that stretch reads RR. Residue Cys-146 is the Nucleophile of the active site. Residues 166–169, Asn-177, and 207–209 each bind dUMP; these read RSCD and HLY. (6R)-5,10-methylene-5,6,7,8-tetrahydrofolate is bound at residue Asp-169. Ala-263 contributes to the (6R)-5,10-methylene-5,6,7,8-tetrahydrofolate binding site.

The protein belongs to the thymidylate synthase family. Bacterial-type ThyA subfamily. Homodimer.

The protein resides in the cytoplasm. The enzyme catalyses dUMP + (6R)-5,10-methylene-5,6,7,8-tetrahydrofolate = 7,8-dihydrofolate + dTMP. It participates in pyrimidine metabolism; dTTP biosynthesis. Functionally, catalyzes the reductive methylation of 2'-deoxyuridine-5'-monophosphate (dUMP) to 2'-deoxythymidine-5'-monophosphate (dTMP) while utilizing 5,10-methylenetetrahydrofolate (mTHF) as the methyl donor and reductant in the reaction, yielding dihydrofolate (DHF) as a by-product. This enzymatic reaction provides an intracellular de novo source of dTMP, an essential precursor for DNA biosynthesis. The protein is Thymidylate synthase of Shewanella putrefaciens (strain CN-32 / ATCC BAA-453).